A 665-amino-acid polypeptide reads, in one-letter code: Protein-arginine deiminase type-2 (665 aa).

Asp-123, Asp-125, Asp-127, Glu-131, Asn-154, Asp-156, Asp-158, Asp-166, Asp-169, Lys-171, Asp-177, Asp-180, Glu-354, Asp-389, Phe-408, Leu-411, and Glu-412 together coordinate Ca(2+). Catalysis depends on Cys-647, which acts as the Nucleophile.

Belongs to the protein arginine deiminase family. Homodimer. It depends on Ca(2+) as a cofactor. Spinal cord, submaxillary gland, cerebrum, cerebellum, and skeletal muscle.

Its subcellular location is the cytoplasm. It carries out the reaction L-arginyl-[protein] + H2O = L-citrullyl-[protein] + NH4(+). Catalyzes the deimination of arginine residues of proteins. This is Protein-arginine deiminase type-2 (Padi2) from Rattus norvegicus (Rat).